A 170-amino-acid chain; its full sequence is Putative calmodulin-like protein 6 (170 aa).

EF-hand domains follow at residues 8–43 (QQIS…LGMA), 44–79 (PSQE…KLYE), 84–119 (DDEE…LGEE), and 120–155 (MTED…TWNI). Residues Asp21, Asn23, Asp25, Cys27, Glu32, Asp57, Asp59, Asn61, Thr63, Glu68, Asp97, Asp99, Asn101, Glu108, Asp133, Asn135, Asp137, Gln139, and Glu144 each contribute to the Ca(2+) site.

Belongs to the calmodulin family.

Functionally, potential calcium sensor. This is Putative calmodulin-like protein 6 (CML6) from Oryza sativa subsp. japonica (Rice).